The chain runs to 172 residues: Immune protein Tsi1 (172 aa).

The N-terminal stretch at 1–19 (MKLLAGSFAALFLSLSAQA) is a signal peptide. Disulfide bonds link Cys-22-Cys-167, Cys-79-Cys-121, and Cys-147-Cys-155.

In terms of assembly, forms a heterotetramer with Tse1 consisting of two Tse1 dimers and two Tsi1 dimers. Formation of the complex inactivates Tse1 enzymatic activity.

Its function is as follows. Immunity protein that plays a role in preventing early activation of toxin Tse1. Binds to a large surface of Tse1 and thereby occludes the active site to specifically inhibits enzyme activity by forming a hydrogen bond with the catalytic diad. The chain is Immune protein Tsi1 from Pseudomonas aeruginosa (strain ATCC 15692 / DSM 22644 / CIP 104116 / JCM 14847 / LMG 12228 / 1C / PRS 101 / PAO1).